Reading from the N-terminus, the 438-residue chain is Proline--tRNA ligase (438 aa).

It belongs to the class-II aminoacyl-tRNA synthetase family. ProS type 2 subfamily. As to quaternary structure, homodimer.

It localises to the cytoplasm. The catalysed reaction is tRNA(Pro) + L-proline + ATP = L-prolyl-tRNA(Pro) + AMP + diphosphate. In terms of biological role, catalyzes the attachment of proline to tRNA(Pro) in a two-step reaction: proline is first activated by ATP to form Pro-AMP and then transferred to the acceptor end of tRNA(Pro). The sequence is that of Proline--tRNA ligase from Rhodopseudomonas palustris (strain TIE-1).